The sequence spans 293 residues: Nucleotide-binding protein Dole_0503 (293 aa).

11–18 (GLSGSGKS) contributes to the ATP binding site. 62–65 (DLRE) contacts GTP.

This sequence belongs to the RapZ-like family.

Functionally, displays ATPase and GTPase activities. The chain is Nucleotide-binding protein Dole_0503 from Desulfosudis oleivorans (strain DSM 6200 / JCM 39069 / Hxd3) (Desulfococcus oleovorans).